A 254-amino-acid chain; its full sequence is tRNA (guanine-N(1)-)-methyltransferase (254 aa).

Residues glycine 121 and 141–146 (LGDYVL) contribute to the S-adenosyl-L-methionine site.

The protein belongs to the RNA methyltransferase TrmD family. Homodimer.

The protein resides in the cytoplasm. The enzyme catalyses guanosine(37) in tRNA + S-adenosyl-L-methionine = N(1)-methylguanosine(37) in tRNA + S-adenosyl-L-homocysteine + H(+). Specifically methylates guanosine-37 in various tRNAs. This is tRNA (guanine-N(1)-)-methyltransferase from Psychrobacter cryohalolentis (strain ATCC BAA-1226 / DSM 17306 / VKM B-2378 / K5).